The primary structure comprises 842 residues: Protein translocase subunit SecA (842 aa).

ATP-binding positions include Gln85, 103–107 (GEGKT), and Asp493. Residues Cys825, Cys827, Cys836, and His837 each coordinate Zn(2+).

Belongs to the SecA family. In terms of assembly, monomer and homodimer. Part of the essential Sec protein translocation apparatus which comprises SecA, SecYEG and auxiliary proteins SecDF. Other proteins may also be involved. The cofactor is Zn(2+).

The protein resides in the cell membrane. Its subcellular location is the cytoplasm. The enzyme catalyses ATP + H2O + cellular proteinSide 1 = ADP + phosphate + cellular proteinSide 2.. In terms of biological role, part of the Sec protein translocase complex. Interacts with the SecYEG preprotein conducting channel. Has a central role in coupling the hydrolysis of ATP to the transfer of proteins into and across the cell membrane, serving as an ATP-driven molecular motor driving the stepwise translocation of polypeptide chains across the membrane. The protein is Protein translocase subunit SecA of Streptococcus equi subsp. zooepidemicus (strain MGCS10565).